We begin with the raw amino-acid sequence, 95 residues long: UPF0213 protein ESA_03545 (95 aa).

The region spanning 2–77 (EEWFLYLIRC…KQLTKRQKEQ (76 aa)) is the GIY-YIG domain.

The protein belongs to the UPF0213 family.

The chain is UPF0213 protein ESA_03545 from Cronobacter sakazakii (strain ATCC BAA-894) (Enterobacter sakazakii).